Reading from the N-terminus, the 265-residue chain is Mlc titration factor A (265 aa).

Residues histidine 111, histidine 148, histidine 152, and glutamate 211 each contribute to the Zn(2+) site.

It belongs to the MtfA family. Interacts with Mlc. The cofactor is Zn(2+).

It localises to the cytoplasm. In terms of biological role, involved in the modulation of the activity of the glucose-phosphotransferase system (glucose-PTS). Interacts with the transcriptional repressor Mlc, preventing its interaction with DNA and leading to the modulation of expression of genes regulated by Mlc, including ptsG, which encodes the PTS system glucose-specific EIICB component. Its function is as follows. Shows zinc-dependent metallopeptidase activity. This is Mlc titration factor A from Salmonella choleraesuis (strain SC-B67).